Consider the following 983-residue polypeptide: Type IV secretion system protein CagE (983 aa).

597-604 contacts ATP; sequence GSTGSGKT.

The protein belongs to the TrbE/VirB4 family. Component of the Cag type IV secretion system, which is composed of a wheel-shaped outer membrane complex (OMC) and an inner membrane complex (IMC). Interacts with CagV and CagBeta.

It localises to the cell inner membrane. It carries out the reaction ATP + H2O + cellular proteinSide 1 = ADP + phosphate + cellular proteinSide 2.. ATPase component of the type IV secretion system Cag (Cag-T4SS). Acts as a molecular motor to provide the energy that is required for the export of proteins. Required for CagA translocation and induction of IL-8 in host gastric epithelial cells. Plays a key role in Cag-T4SS pilus biogenesis, especially in the localization and stabilization of the pilus-associated components CagI, CagL and the surface protein CagH. Is also critical for assembly of the entire cytoplasmic portion of the Cag inner membrane complex (IMC). The polypeptide is Type IV secretion system protein CagE (Helicobacter pylori (strain ATCC 700392 / 26695) (Campylobacter pylori)).